We begin with the raw amino-acid sequence, 196 residues long: Guanylate kinase (196 aa).

In terms of domain architecture, Guanylate kinase-like spans 7–191 (RNIVLLVGPS…AAEEIEKIIL (185 aa)). An ATP-binding site is contributed by 14–21 (GPSGVGKG).

The protein belongs to the guanylate kinase family.

The protein localises to the cytoplasm. The enzyme catalyses GMP + ATP = GDP + ADP. Functionally, essential for recycling GMP and indirectly, cGMP. This Mycoplasmopsis pulmonis (strain UAB CTIP) (Mycoplasma pulmonis) protein is Guanylate kinase.